Here is a 223-residue protein sequence, read N- to C-terminus: UPF0441 protein YgiB (223 aa).

Positions 201-223 are disordered; sequence ESVAKQSTMQRSAAGTSTRSMGG. The segment covering 204–223 has biased composition (polar residues); the sequence is AKQSTMQRSAAGTSTRSMGG.

This sequence belongs to the UPF0441 family.

The sequence is that of UPF0441 protein YgiB from Salmonella gallinarum (strain 287/91 / NCTC 13346).